Here is a 286-residue protein sequence, read N- to C-terminus: Movement protein (286 aa).

This sequence belongs to the tenuiviruses pc4 protein family. As to quaternary structure, interacts with the rice proteins DJA6 and HSP17.9A.

The protein localises to the host cytoplasm. Functionally, transports viral genome to neighboring plant cells directly through plasmosdesmata, without any budding. The movement protein allows efficient cell to cell propagation, by bypassing the host cell wall barrier. The chain is Movement protein from Avena sativa (Oat).